We begin with the raw amino-acid sequence, 165 residues long: Transcription factor TCP16 (165 aa).

The segment covering Met-1–Gln-11 has biased composition (polar residues). Disordered stretches follow at residues Met-1–His-21 and Gly-146–Val-165. A compositionally biased stretch (basic residues) spans Lys-12–His-21. The TCP domain occupies Pro-17–Ala-71. Residues Ala-148–Val-165 show a composition bias toward low complexity.

As to expression, mostly in anther in young buds.

It localises to the nucleus. In terms of biological role, required during early processes in pollen development. This is Transcription factor TCP16 (TCP16) from Arabidopsis thaliana (Mouse-ear cress).